Reading from the N-terminus, the 340-residue chain is MGEMEQLRQEAEQLKKQIADARKACADITLAELVSGLEVVGRVQMRTRRTLRGHLAKIYAMHWATDSKLLVSASQDGKLIVWDTYTTNKVHAIPLRSSWVMTCAYAPSGNFVACGGLDNMCSIYNLKSREGNVKVSRELSAHTGYLSCCRFLDDNNIVTSSGDTTCALWDIETGQQKTVFVGHTGDCMSLAVSPDYKLFISGACDASAKLWDVREGTCRQTFTGHESDINAICFFPNGEAICTGSDDASCRLFDLRADQELTAYSQESIICGITSVAFSLSGRLLFAGYDDFNCNVWDSLKCERVGILSGHDNRVSCLGVTADGMAVATGSWDSFLKIWN.

WD repeat units lie at residues 53-83 (GHLA…IVWD), 95-125 (LRSS…SIYN), 141-170 (AHTG…ALWD), 182-212 (GHTG…KLWD), 224-254 (GHES…RLFD), 268-298 (SIIC…NVWD), and 310-340 (GHDN…KIWN).

This sequence belongs to the WD repeat G protein beta family. In terms of assembly, g proteins are composed of 3 units, alpha, beta and gamma. Interacts with RASD2.

Its function is as follows. Guanine nucleotide-binding proteins (G proteins) are involved as a modulator or transducer in various transmembrane signaling systems. The beta and gamma chains are required for the GTPase activity, for replacement of GDP by GTP, and for G protein-effector interaction. The polypeptide is Guanine nucleotide-binding protein G(I)/G(S)/G(T) subunit beta-3 (Gnb3) (Mus musculus (Mouse)).